The following is a 592-amino-acid chain: MRGRDLCSSTQSQALGSLRTTTPAFTLNIPSEANHTEQPPAGLGARLQEAGVSIPPRRGRPTPTLEKKKKPHLMAEDEPSGALLKPLVFRVDETTPAVVQSVLLERGWNKFDKQEQNAEDWNLYWRTSSFRMTEHNSVKPWQQLNHHPGTTKLTRKDCLAKHLKHMRRMYGTSLYQFIPLTFVMPNDYTKFVAEYFQERQMLGTKHSYWICKPAELSRGRGILIFSDFKDFIFDDMYIVQKYISNPLLIGRYKCDLRIYVCVTGFKPLTIYVYQEGLVRFATEKFDLSNLQNNYAHLTNSSINKSGASYEKIKEVIGHGCKWTLSRFFSYLRSWDVDDLLLWKKIHRMVILTILAIAPSVPFAANCFELFGFDILIDDNLKPWLLEVNYSPALTLDCSTDVLVKRKLVHDIIDLIYLNGLRNEGREASNATHGNSNIDAAKSDRGGLDAPDCLPYDSLSFTSRMYNEDDSVVEKAVSVRPEAAPASQLEGEMSGQDFHLSTREMPQSKPKLRSRHTPHKTLMPYASLFQSHSCKTKTSPCVLSDRGKAPDPQAGNFVLVFPFNEATLGASRNGLNVKRIIQELQKLMNKQHS.

Disordered regions lie at residues 1–23 (MRGRDLCSSTQSQALGSLRTTTP) and 51–77 (GVSIPPRRGRPTPTLEKKKKPHLMAED). Polar residues predominate over residues 7–23 (CSSTQSQALGSLRTTTP). In terms of domain architecture, TTL spans 84–427 (LKPLVFRVDE…NGLRNEGREA (344 aa)). ATP contacts are provided by residues K212, 218–219 (RG), 240–243 (QKYI), and 253–255 (KCD). R218 provides a ligand contact to a protein. R279 lines the L-glutamate pocket. 298–299 (TN) contacts ATP. The L-glutamate site is built by S301 and K321. Mg(2+) contacts are provided by D373, E386, and N388. K404 is an L-glutamate binding site.

The protein belongs to the tubulin--tyrosine ligase family. It depends on Mg(2+) as a cofactor. In terms of tissue distribution, testis.

In terms of biological role, probable tubulin polyglutamylase that generates side chains of glutamate on the gamma-carboxyl group of specific glutamate residues within the C-terminal tail of target proteins. Similar to TTLL1, may acquire enzymatic activity only in complex with other proteins as it is most likely lacking domains important for autonomous activity. Probably involved in the side-chain initiation step of the polyglutamylation reaction rather than the elongation step. The chain is Probable tubulin polyglutamylase TTLL2 from Homo sapiens (Human).